The chain runs to 241 residues: Triosephosphate isomerase (241 aa).

Substrate is bound at residue 9–11 (NWK). Residue His96 is the Electrophile of the active site. The active-site Proton acceptor is Glu165. Substrate is bound by residues Gly171, Ser204, and 225 to 226 (GG).

Belongs to the triosephosphate isomerase family. As to quaternary structure, homodimer.

It is found in the cytoplasm. It catalyses the reaction D-glyceraldehyde 3-phosphate = dihydroxyacetone phosphate. It functions in the pathway carbohydrate biosynthesis; gluconeogenesis. Its pathway is carbohydrate degradation; glycolysis; D-glyceraldehyde 3-phosphate from glycerone phosphate: step 1/1. Functionally, involved in the gluconeogenesis. Catalyzes stereospecifically the conversion of dihydroxyacetone phosphate (DHAP) to D-glyceraldehyde-3-phosphate (G3P). This Prochlorococcus marinus subsp. pastoris (strain CCMP1986 / NIES-2087 / MED4) protein is Triosephosphate isomerase.